Consider the following 380-residue polypeptide: Alanine racemase (380 aa).

Catalysis depends on Lys41, which acts as the Proton acceptor; specific for D-alanine. Position 41 is an N6-(pyridoxal phosphate)lysine (Lys41). Arg141 is a substrate binding site. Catalysis depends on Tyr271, which acts as the Proton acceptor; specific for L-alanine. Met318 provides a ligand contact to substrate.

This sequence belongs to the alanine racemase family. It depends on pyridoxal 5'-phosphate as a cofactor.

It catalyses the reaction L-alanine = D-alanine. The protein operates within amino-acid biosynthesis; D-alanine biosynthesis; D-alanine from L-alanine: step 1/1. Its function is as follows. Catalyzes the interconversion of L-alanine and D-alanine. May also act on other amino acids. The polypeptide is Alanine racemase (alr) (Latilactobacillus sakei subsp. sakei (strain 23K) (Lactobacillus sakei subsp. sakei)).